The chain runs to 259 residues: Acyl-[acyl-carrier-protein]--UDP-N-acetylglucosamine O-acyltransferase (259 aa).

This sequence belongs to the transferase hexapeptide repeat family. LpxA subfamily. As to quaternary structure, homotrimer.

Its subcellular location is the cytoplasm. It carries out the reaction a (3R)-hydroxyacyl-[ACP] + UDP-N-acetyl-alpha-D-glucosamine = a UDP-3-O-[(3R)-3-hydroxyacyl]-N-acetyl-alpha-D-glucosamine + holo-[ACP]. It participates in glycolipid biosynthesis; lipid IV(A) biosynthesis; lipid IV(A) from (3R)-3-hydroxytetradecanoyl-[acyl-carrier-protein] and UDP-N-acetyl-alpha-D-glucosamine: step 1/6. Involved in the biosynthesis of lipid A, a phosphorylated glycolipid that anchors the lipopolysaccharide to the outer membrane of the cell. In Nautilia profundicola (strain ATCC BAA-1463 / DSM 18972 / AmH), this protein is Acyl-[acyl-carrier-protein]--UDP-N-acetylglucosamine O-acyltransferase.